A 426-amino-acid chain; its full sequence is Glutamate-1-semialdehyde 2,1-aminomutase (426 aa).

K265 carries the N6-(pyridoxal phosphate)lysine modification.

Belongs to the class-III pyridoxal-phosphate-dependent aminotransferase family. HemL subfamily. Homodimer. Requires pyridoxal 5'-phosphate as cofactor.

Its subcellular location is the cytoplasm. It catalyses the reaction (S)-4-amino-5-oxopentanoate = 5-aminolevulinate. It functions in the pathway porphyrin-containing compound metabolism; protoporphyrin-IX biosynthesis; 5-aminolevulinate from L-glutamyl-tRNA(Glu): step 2/2. In Escherichia coli (strain K12 / DH10B), this protein is Glutamate-1-semialdehyde 2,1-aminomutase.